A 152-amino-acid polypeptide reads, in one-letter code: Transcriptional regulator MraZ (152 aa).

SpoVT-AbrB domains follow at residues 5-52 (TSAI…PLPE) and 81-124 (ASDC…HDTA).

It belongs to the MraZ family. In terms of assembly, forms oligomers.

It localises to the cytoplasm. Its subcellular location is the nucleoid. This Colwellia psychrerythraea (strain 34H / ATCC BAA-681) (Vibrio psychroerythus) protein is Transcriptional regulator MraZ.